The following is a 109-amino-acid chain: Spermidine export protein MdtI (109 aa).

The next 4 membrane-spanning stretches (helical) occupy residues 6-26 (FYPIAFLILAVMLEIVANILL), 36-56 (WLGILSLLSVLGAFSALAQAV), 64-84 (AYAMWGGFGIAATVAAGWILF), and 88-108 (LNYKGWIGLILLLAGMVMIKL).

This sequence belongs to the drug/metabolite transporter (DMT) superfamily. Small multidrug resistance (SMR) (TC 2.A.7.1) family. MdtI subfamily. Forms a complex with MdtJ.

The protein localises to the cell inner membrane. Its function is as follows. Catalyzes the excretion of spermidine. The sequence is that of Spermidine export protein MdtI from Yersinia pseudotuberculosis serotype I (strain IP32953).